Reading from the N-terminus, the 768-residue chain is 5-methyltetrahydropteroyltriglutamate--homocysteine methyltransferase (768 aa).

5-methyltetrahydropteroyltri-L-glutamate contacts are provided by residues 17–20 (REWK) and Lys-113. L-homocysteine is bound by residues 440-442 (IGS) and Glu-493. L-methionine is bound by residues 440–442 (IGS) and Glu-493. A 5-methyltetrahydropteroyltri-L-glutamate-binding site is contributed by Trp-570. Asp-608 contributes to the L-homocysteine binding site. Asp-608 is a binding site for L-methionine. Glu-614 contacts 5-methyltetrahydropteroyltri-L-glutamate. Residues His-650, Cys-652, and Glu-674 each contribute to the Zn(2+) site. Catalysis depends on His-703, which acts as the Proton donor. Cys-735 contributes to the Zn(2+) binding site.

This sequence belongs to the vitamin-B12 independent methionine synthase family. Zn(2+) is required as a cofactor.

It catalyses the reaction 5-methyltetrahydropteroyltri-L-glutamate + L-homocysteine = tetrahydropteroyltri-L-glutamate + L-methionine. It functions in the pathway amino-acid biosynthesis; L-methionine biosynthesis via de novo pathway; L-methionine from L-homocysteine (MetE route): step 1/1. In terms of biological role, catalyzes the transfer of a methyl group from 5-methyltetrahydrofolate to homocysteine resulting in methionine formation. The protein is 5-methyltetrahydropteroyltriglutamate--homocysteine methyltransferase of Lactiplantibacillus plantarum (strain ATCC BAA-793 / NCIMB 8826 / WCFS1) (Lactobacillus plantarum).